The sequence spans 376 residues: MGLLAFLKTQFVLHPLVGFVFVVSGLVINFVQLCTLALWPVSKQLYRRLNCRLAYSLWSQLVMLLEWWSCTECTLFTDQATVERFGKEHAVIILNHNFEIDFLCGWTMCERFGVLGSSKVLAKKELLYVPLIGWTWYFLEIVFCKRKWEEDRDTVVEGLRRLSDYPEYMWFLLYCEGTRFTETKHRVSMEVAAAKGLPVLKYHLLPRTKGFTTAVKCLRGTVAAVYDVTLNFRGNKNPSLLGILYGKKYEADMCVRRFPLEDIPLDEKEAAQWLHKLYQEKDALQEIYNQKGMFPGEQFKPARRPWTLLNFLSWATILLSPLFSFVLGVFASGSPLLILTFLGFVGAASFGVRRLIGVTEIEKGSSYGNQEFKKKE.

Topologically, residues 1–124 (MGLLAFLKTQ…LGSSKVLAKK (124 aa)) are cytoplasmic. An HXXXXD motif motif is present at residues 96 to 101 (HNFEID). A helical transmembrane segment spans residues 125-145 (ELLYVPLIGWTWYFLEIVFCK). The Lumenal portion of the chain corresponds to 146–316 (RKWEEDRDTV…TLLNFLSWAT (171 aa)). A helical transmembrane segment spans residues 317-339 (ILLSPLFSFVLGVFASGSPLLIL). Residues 340–376 (TFLGFVGAASFGVRRLIGVTEIEKGSSYGNQEFKKKE) lie on the Cytoplasmic side of the membrane.

It belongs to the 1-acyl-sn-glycerol-3-phosphate acyltransferase family.

It is found in the endoplasmic reticulum membrane. Its subcellular location is the nucleus envelope. It catalyses the reaction a 1-acyl-sn-glycero-3-phosphate + an acyl-CoA = a 1,2-diacyl-sn-glycero-3-phosphate + CoA. The enzyme catalyses pentadecanoyl-CoA + 1-(9Z-octadecenoyl)-sn-glycero-3-phosphate = 1-(9Z)-octadecenoyl-2-pentadecanoyl-sn-glycero-3-phosphate + CoA. The catalysed reaction is heptadecanoyl-CoA + 1-(9Z-octadecenoyl)-sn-glycero-3-phosphate = 1-(9Z)-octadecenoyl-2-heptadecanoyl-sn-glycero-3-phosphate + CoA. It carries out the reaction 1-(9Z-octadecenoyl)-sn-glycero-3-phosphate + octadecanoyl-CoA = 1-(9Z-octadecenoyl)-2-octadecanoyl-sn-glycero-3-phosphate + CoA. It catalyses the reaction nonadecanoyl-CoA + 1-(9Z-octadecenoyl)-sn-glycero-3-phosphate = 1-(9Z)-octadecenoyl-2-nonadecanoyl-sn-glycero-3-phosphate + CoA. The enzyme catalyses 1-(9Z-octadecenoyl)-sn-glycero-3-phosphate + (5Z,8Z,11Z,14Z)-eicosatetraenoyl-CoA = 1-(9Z)-octadecenoyl-2-(5Z,8Z,11Z,14Z)-eicosatetraenoyl-sn-glycero-3-phosphate + CoA. The catalysed reaction is 1-(9Z-octadecenoyl)-sn-glycero-3-phosphate + (9Z)-octadecenoyl-CoA = 1,2-di-(9Z-octadecenoyl)-sn-glycero-3-phosphate + CoA. It carries out the reaction 1-(9Z-octadecenoyl)-sn-glycero-3-phosphate + (9Z,12Z)-octadecadienoyl-CoA = 1-(9Z)-octadecenoyl-2-(9Z,12Z)-octadecadienoyl-sn-glycero-3-phosphate + CoA. It catalyses the reaction 1-(9Z-octadecenoyl)-sn-glycero-3-phosphocholine + (5Z,8Z,11Z,14Z)-eicosatetraenoyl-CoA = 1-(9Z)-octadecenoyl-2-(5Z,8Z,11Z,14Z)-icosatetraenoyl-sn-glycero-3-phosphocholine + CoA. The enzyme catalyses 1-(9Z-octadecenoyl)-sn-glycero-3-phospho-(1D-myo-inositol) + (5Z,8Z,11Z,14Z)-eicosatetraenoyl-CoA = 1-(9Z-octadecenoyl)-2-(5Z,8Z,11Z,14Z-eicosatetraenoyl)-sn-glycero-3-phospho-1D-myo-inositol + CoA. The catalysed reaction is 1-(9Z-octadecenoyl)-sn-glycero-3-phospho-L-serine + (5Z,8Z,11Z,14Z)-eicosatetraenoyl-CoA = 1-(9Z-octadecenoyl)-2-(5Z,8Z,11Z,14Z-eicosatetraenoyl)-sn-glycero-3-phospho-L-serine + CoA. It carries out the reaction 1-hexadecanoyl-sn-glycero-3-phosphate + (9Z)-octadecenoyl-CoA = 1-hexadecanoyl-2-(9Z-octadecenoyl)-sn-glycero-3-phosphate + CoA. It catalyses the reaction 1-hexadecanoyl-sn-glycero-3-phosphate + (5Z,8Z,11Z,14Z)-eicosatetraenoyl-CoA = 1-hexadecanoyl-2-(5Z,8Z,11Z,14Z-eicosatetraenoyl)-sn-glycero-3-phosphate + CoA. The enzyme catalyses 1-heptadecanoyl-sn-glycero-3-phosphate + (5Z,8Z,11Z,14Z)-eicosatetraenoyl-CoA = 1-heptadecanoyl-2-(5Z,8Z,11Z,14Z)-eicosatetraenoyl-sn-glycero-3-phosphate + CoA. The catalysed reaction is 1-octadecanoyl-sn-glycero-3-phosphate + (9Z)-octadecenoyl-CoA = 1-octadecanoyl-2-(9Z-octadecenoyl)-sn-glycero-3-phosphate + CoA. It carries out the reaction 1-octadecanoyl-sn-glycero-3-phosphate + (5Z,8Z,11Z,14Z)-eicosatetraenoyl-CoA = 1-octadecanoyl-2-(5Z,8Z,11Z,14Z-eicosatetraenoyl)-sn-glycero-3-phosphate + CoA. It catalyses the reaction 1-(9Z-octadecenoyl)-sn-glycero-3-phosphate + hexadecanoyl-CoA = 1-hexadecanoyl-2-(9Z-octadecenoyl)-sn-glycero-3-phosphate + CoA. The enzyme catalyses 1-O-(9Z-octadecenyl)-sn-glycero-3-phosphate + (5Z,8Z,11Z,14Z)-eicosatetraenoyl-CoA = 1-O-(9Z-octadecenyl)-2-(5Z,8Z,11Z,14Z-eicosatetraenoyl)-sn-glycero-3-phosphate + CoA. The catalysed reaction is a 1-acyl-sn-glycero-3-phospho-(1D-myo-inositol) + (5Z,8Z,11Z,14Z)-eicosatetraenoyl-CoA = a 1-acyl-2-(5Z,8Z,11Z,14Z-eicosatetraenoyl)-sn-glycero-3-phospho-(1D-myo-inositol) + CoA. The protein operates within phospholipid metabolism; CDP-diacylglycerol biosynthesis; CDP-diacylglycerol from sn-glycerol 3-phosphate: step 2/3. Its function is as follows. Converts 1-acyl-sn-glycerol-3-phosphate (lysophosphatidic acid or LPA) into 1,2-diacyl-sn-glycerol-3-phosphate (phosphatidic acid or PA) by incorporating an acyl moiety at the sn-2 position of the glycerol backbone. Acts on LPA containing saturated or unsaturated fatty acids C16:0-C20:4 at the sn-1 position using C18:1, C20:4 or C18:2-CoA as the acyl donor. Also acts on lysophosphatidylcholine, lysophosphatidylinositol and lysophosphatidylserine using C18:1 or C20:4-CoA. Has a preference for arachidonoyl-CoA as a donor. Also has a modest lysophosphatidylinositol acyltransferase (LPIAT) activity, converts lysophosphatidylinositol (LPI) into phosphatidylinositol. The sequence is that of 1-acyl-sn-glycerol-3-phosphate acyltransferase gamma (AGPAT3) from Pongo abelii (Sumatran orangutan).